Reading from the N-terminus, the 514-residue chain is Cytochrome P450 87A3 (514 aa).

Helical transmembrane passes span 36-56 and 315-335; these read ASSMAYIALLCAALAAVVALL and LMFVLLFASFETTALALTIGV. Cysteine 463 is a binding site for heme.

This sequence belongs to the cytochrome P450 family. It depends on heme as a cofactor. Expressed in roots and coleoptiles, but not in leaves.

The protein localises to the cytoplasmic vesicle membrane. The polypeptide is Cytochrome P450 87A3 (CYP87A3) (Oryza sativa subsp. japonica (Rice)).